The following is a 238-amino-acid chain: 7-carboxy-7-deazaguanine synthase (238 aa).

Residues 14–16 and R29 each bind substrate; that span reads IQG. A Radical SAM core domain is found at 20 to 234; that stretch reads VVGQKTMFIR…PQLHALVWGN (215 aa). Residues C33, C37, and C40 each contribute to the [4Fe-4S] cluster site. S42 contacts Mg(2+). S80 is a substrate binding site. Residues G82 and 126–128 contribute to the S-adenosyl-L-methionine site; that span reads SPK.

Belongs to the radical SAM superfamily. 7-carboxy-7-deazaguanine synthase family. In terms of assembly, homodimer. [4Fe-4S] cluster serves as cofactor. It depends on S-adenosyl-L-methionine as a cofactor. Mg(2+) is required as a cofactor.

It catalyses the reaction 6-carboxy-5,6,7,8-tetrahydropterin + H(+) = 7-carboxy-7-deazaguanine + NH4(+). It functions in the pathway purine metabolism; 7-cyano-7-deazaguanine biosynthesis. In terms of biological role, catalyzes the complex heterocyclic radical-mediated conversion of 6-carboxy-5,6,7,8-tetrahydropterin (CPH4) to 7-carboxy-7-deazaguanine (CDG), a step common to the biosynthetic pathways of all 7-deazapurine-containing compounds. This Bacillus cereus (strain ATCC 14579 / DSM 31 / CCUG 7414 / JCM 2152 / NBRC 15305 / NCIMB 9373 / NCTC 2599 / NRRL B-3711) protein is 7-carboxy-7-deazaguanine synthase.